Here is a 371-residue protein sequence, read N- to C-terminus: Anhydro-N-acetylmuramic acid kinase (371 aa).

Residue 9 to 16 (GTSMDGID) coordinates ATP.

This sequence belongs to the anhydro-N-acetylmuramic acid kinase family.

The catalysed reaction is 1,6-anhydro-N-acetyl-beta-muramate + ATP + H2O = N-acetyl-D-muramate 6-phosphate + ADP + H(+). It functions in the pathway amino-sugar metabolism; 1,6-anhydro-N-acetylmuramate degradation. The protein operates within cell wall biogenesis; peptidoglycan recycling. Catalyzes the specific phosphorylation of 1,6-anhydro-N-acetylmuramic acid (anhMurNAc) with the simultaneous cleavage of the 1,6-anhydro ring, generating MurNAc-6-P. Is required for the utilization of anhMurNAc either imported from the medium or derived from its own cell wall murein, and thus plays a role in cell wall recycling. The sequence is that of Anhydro-N-acetylmuramic acid kinase from Azorhizobium caulinodans (strain ATCC 43989 / DSM 5975 / JCM 20966 / LMG 6465 / NBRC 14845 / NCIMB 13405 / ORS 571).